Reading from the N-terminus, the 38-residue chain is Photosystem II reaction center protein L (38 aa).

Residues 17-37 form a helical membrane-spanning segment; sequence SLFWGLLLIFVLAVLFSSYFF.

Belongs to the PsbL family. PSII is composed of 1 copy each of membrane proteins PsbA, PsbB, PsbC, PsbD, PsbE, PsbF, PsbH, PsbI, PsbJ, PsbK, PsbL, PsbM, PsbT, PsbX, PsbY, PsbZ, Psb30/Ycf12, at least 3 peripheral proteins of the oxygen-evolving complex and a large number of cofactors. It forms dimeric complexes.

The protein resides in the plastid. It is found in the chloroplast thylakoid membrane. One of the components of the core complex of photosystem II (PSII). PSII is a light-driven water:plastoquinone oxidoreductase that uses light energy to abstract electrons from H(2)O, generating O(2) and a proton gradient subsequently used for ATP formation. It consists of a core antenna complex that captures photons, and an electron transfer chain that converts photonic excitation into a charge separation. This subunit is found at the monomer-monomer interface and is required for correct PSII assembly and/or dimerization. The sequence is that of Photosystem II reaction center protein L from Porphyra purpurea (Red seaweed).